Here is a 454-residue protein sequence, read N- to C-terminus: Nuclear envelope integral membrane protein (454 aa).

The signal sequence occupies residues 1 to 18 (MHSAGLLMLTVAGYFTSG). N38 carries an N-linked (GlcNAc...) asparagine glycan. 5 consecutive transmembrane segments (helical) span residues 138–158 (IPLDLWRLAQFAVGILILFSA), 166–186 (VFYYLVGIVIGICASLLVVIY), 197–217 (MMYGVLIGGWTIGFYVIKQLA), 231–251 (VLGYLVITGLISFLICYRIGP), and 280–300 (TSAVIFIMVLVFVAHYFPISW). Acidic residues predominate over residues 388–405 (SMDAAPEEESVEEPEEDK). A disordered region spans residues 388-454 (SMDAAPEEES…QEVDLRQVVQ (67 aa)). Residues 414–424 (NSQFRYQQAAR) are compositionally biased toward polar residues. Positions 428 to 446 (PEPESESDDSEEEEFFEQE) are enriched in acidic residues.

The protein belongs to the NEMP family. As to quaternary structure, interacts with OTE. Expressed in both germline and somatic cells in the larval testis and prepupal ovary (at protein level). Also detected in the larval eye and larval wing disk (at protein level).

It localises to the nucleus inner membrane. Contributes to nuclear envelope stiffness in germ cells. Required for male and female fertility. The chain is Nuclear envelope integral membrane protein from Drosophila melanogaster (Fruit fly).